The chain runs to 338 residues: m7GpppX diphosphatase (338 aa).

Positions M1 to S36 are disordered. A2 carries the post-translational modification N-acetylalanine. The nuclear localization signal (NLS) motif lies at K9–R12. S23 and S100 each carry phosphoserine. N6-acetyllysine occurs at positions 137 and 141. The nuclear export sequence (NES) motif lies at K141 to T153. Substrate is bound by residues W174, E184, D204, K206, and H267–H278. A Histidine triad motif motif is present at residues H274–H278. H276 (nucleophile) is an active-site residue.

It belongs to the HIT family. In terms of assembly, homodimer. Associates with components of the exosome multienzyme ribonuclease complex, such as EXOSC3 and EXOSC4. Interacts with NDOR1.

It is found in the cytoplasm. Its subcellular location is the nucleus. The enzyme catalyses a 5'-end (N(7)-methyl 5'-triphosphoguanosine)-ribonucleoside in mRNA + H2O = N(7)-methyl-GMP + a 5'-end diphospho-ribonucleoside in mRNA + 2 H(+). With respect to regulation, the hydrolytic product 7-methylguanosine diphosphate (m7GDP) efficiently inhibits the decapping scavenger activity and acts as a competitive inhibitor in vitro. Inhibited by 2,4-diaminoquinazoline. Functionally, decapping scavenger enzyme that catalyzes the cleavage of a residual cap structure following the degradation of mRNAs by the 3'-&gt;5' exosome-mediated mRNA decay pathway. Hydrolyzes cap analog structures like 7-methylguanosine nucleoside triphosphate (m7GpppG) with up to 10 nucleotide substrates (small capped oligoribonucleotides) and specifically releases 5'-phosphorylated RNA fragments and 7-methylguanosine monophosphate (m7GMP). Cleaves cap analog structures like tri-methyl guanosine nucleoside triphosphate (m3(2,2,7)GpppG) with very poor efficiency. Does not hydrolyze unmethylated cap analog (GpppG) and shows no decapping activity on intact m7GpppG-capped mRNA molecules longer than 25 nucleotides. Does not hydrolyze 7-methylguanosine diphosphate (m7GDP) to m7GMP. May also play a role in the 5'-&gt;3 mRNA decay pathway; m7GDP, the downstream product released by the 5'-&gt;3' mRNA mediated decapping activity, may be also converted by DCPS to m7GMP. Binds to m7GpppG and strongly to m7GDP. Plays a role in first intron splicing of pre-mRNAs. Inhibits activation-induced cell death. This Mus musculus (Mouse) protein is m7GpppX diphosphatase (Dcps).